The following is a 202-amino-acid chain: 7-cyano-7-deazaguanine synthase 1 (202 aa).

7 to 17 (MSGGLDSSSAA) provides a ligand contact to ATP. Cys-166, Cys-174, Cys-177, and Cys-180 together coordinate Zn(2+).

It belongs to the QueC family. It depends on Zn(2+) as a cofactor.

It catalyses the reaction 7-carboxy-7-deazaguanine + NH4(+) + ATP = 7-cyano-7-deazaguanine + ADP + phosphate + H2O + H(+). It participates in purine metabolism; 7-cyano-7-deazaguanine biosynthesis. Its function is as follows. Catalyzes the ATP-dependent conversion of 7-carboxy-7-deazaguanine (CDG) to 7-cyano-7-deazaguanine (preQ(0)). In Sulfurisphaera tokodaii (strain DSM 16993 / JCM 10545 / NBRC 100140 / 7) (Sulfolobus tokodaii), this protein is 7-cyano-7-deazaguanine synthase 1 (queC1).